The primary structure comprises 201 residues: MSRYRGPRLRISRRLGDLPGLTRKISKKLSPAGEHGQQLRKPSEYSLRLEEKQKLRFNYGLSEKQLSKYIKIAKKVTGSTGLILLQILEMRLDNVIFRLGLSPTLPAARQLVNHGHILINKQKVSICSYQCKPGDIIDVQAKDSSQNLVKRYLSFPTLVGIPNHLELNTKTLNAKINAIVERESVALQMNELLVVEYYSRK.

One can recognise an S4 RNA-binding domain in the interval 90-153 (MRLDNVIFRL…SSQNLVKRYL (64 aa)).

Belongs to the universal ribosomal protein uS4 family. Part of the 30S ribosomal subunit. Contacts protein S5. The interaction surface between S4 and S5 is involved in control of translational fidelity.

Its subcellular location is the plastid. The protein localises to the chloroplast. Its function is as follows. One of the primary rRNA binding proteins, it binds directly to 16S rRNA where it nucleates assembly of the body of the 30S subunit. With S5 and S12 plays an important role in translational accuracy. This Gracilaria tenuistipitata var. liui (Red alga) protein is Small ribosomal subunit protein uS4c (rps4).